The primary structure comprises 551 residues: Chaperonin GroEL (551 aa).

ATP contacts are provided by residues T30–P33, K51, D87–T91, G415, N479–A481, and D495. The disordered stretch occupies residues D523–M551. The segment covering G539–M551 has biased composition (gly residues).

This sequence belongs to the chaperonin (HSP60) family. Forms a cylinder of 14 subunits composed of two heptameric rings stacked back-to-back. Interacts with the co-chaperonin GroES.

It localises to the cytoplasm. It catalyses the reaction ATP + H2O + a folded polypeptide = ADP + phosphate + an unfolded polypeptide.. Together with its co-chaperonin GroES, plays an essential role in assisting protein folding. The GroEL-GroES system forms a nano-cage that allows encapsulation of the non-native substrate proteins and provides a physical environment optimized to promote and accelerate protein folding. In Buchnera aphidicola subsp. Chaetophorus leucomelas, this protein is Chaperonin GroEL.